Reading from the N-terminus, the 301-residue chain is Glutamyl-Q tRNA(Asp) synthetase (301 aa).

L-glutamate-binding positions include 8 to 12 and Glu44; that span reads RFAPS. Residues 11–21 carry the 'HIGH' region motif; the sequence is PSPTGPLHFGS. Residues Cys100, Cys102, Tyr122, and Cys126 each contribute to the Zn(2+) site. The L-glutamate site is built by Tyr180 and Arg198. The short motif at 236-240 is the 'KMSKS' region element; sequence KLSKQ. Lys239 is an ATP binding site.

The protein belongs to the class-I aminoacyl-tRNA synthetase family. GluQ subfamily. Requires Zn(2+) as cofactor.

Functionally, catalyzes the tRNA-independent activation of glutamate in presence of ATP and the subsequent transfer of glutamate onto a tRNA(Asp). Glutamate is transferred on the 2-amino-5-(4,5-dihydroxy-2-cyclopenten-1-yl) moiety of the queuosine in the wobble position of the QUC anticodon. The polypeptide is Glutamyl-Q tRNA(Asp) synthetase (Dechloromonas aromatica (strain RCB)).